Reading from the N-terminus, the 523-residue chain is Carboxypeptidase Y (523 aa).

Residues 1–20 form the signal peptide; that stretch reads MILHTYIILSLLTIFPKAIG. A propeptide spanning residues 21-107 is cleaved from the precursor; the sequence is LSLQMPMALE…QELPNYRLRV (87 aa). 5 disulfides stabilise this stretch: Cys162–Cys401, Cys296–Cys310, Cys320–Cys343, Cys327–Cys336, and Cys365–Cys371. N-linked (GlcNAc...) asparagine glycosylation occurs at Asn193. Residue Ser249 is part of the active site. Asn271 carries an N-linked (GlcNAc...) asparagine glycan. Asp441 is an active-site residue. Asn484 and Asn487 each carry an N-linked (GlcNAc...) asparagine glycan. His498 is a catalytic residue.

This sequence belongs to the peptidase S10 family.

It is found in the vacuole. It catalyses the reaction Release of a C-terminal amino acid with broad specificity.. Its function is as follows. Involved in degradation of small peptides. This chain is Carboxypeptidase Y (PRC1), found in Komagataella phaffii (strain GS115 / ATCC 20864) (Yeast).